The chain runs to 334 residues: MATLKEKLIASVADDEAAVPNNKITVVGVGQVGMACAISILGKSLADELALVDVLEDKLKGEMMDLQHGSLFLQTPKIVADKDYSVTANSKIVVVTAGVRQQEGESRLNLVQRNVNVFKFIIPQIVKYSPDCTIIVVSNPVDILTYVTWKLSGLPKHRVIGSGCNLDSARFRYLMAEKLGIHPSSCHGWILGEHGDSSVAVWSGVNVAGVSLQELNPEMGTDNDSENWKEVHKMVVDSAYEVIKLKGYTNWAIGLSVADLIESMLKNLSRIHPVSTMVKGMYGIENEVFLSLPCILNARGLTSVINQKLKDDEVAQLRKSADTLWDIQKDLKDL.

Ala-2 bears the N-acetylalanine mark. Lys-7 bears the N6-acetyllysine mark. Residues Ser-11 and Ser-44 each carry the phosphoserine modification. Residues 30–58 (GQVG…LEDK) and Arg-100 contribute to the NAD(+) site. Lys-58 is subject to N6-acetyllysine. Arg-107 serves as a coordination point for substrate. N6-acetyllysine is present on Lys-119. An NAD(+)-binding site is contributed by Asn-139. Substrate-binding residues include Asn-139 and Arg-170. The active-site Proton acceptor is the His-194. Tyr-240 is modified (phosphotyrosine). Thr-249 serves as a coordination point for substrate. Position 329 is an N6-acetyllysine (Lys-329).

Belongs to the LDH/MDH superfamily. LDH family. As to quaternary structure, homotetramer. Interacts with PTEN upstream reading frame protein MP31; the interaction leads to inhibition of mitochondrial lactate dehydrogenase activity, preventing conversion of lactate to pyruvate in mitochondria.

It is found in the cytoplasm. It localises to the mitochondrion inner membrane. It catalyses the reaction (S)-lactate + NAD(+) = pyruvate + NADH + H(+). Its pathway is fermentation; pyruvate fermentation to lactate; (S)-lactate from pyruvate: step 1/1. In terms of biological role, interconverts simultaneously and stereospecifically pyruvate and lactate with concomitant interconversion of NADH and NAD(+). In Mus musculus (Mouse), this protein is L-lactate dehydrogenase B chain (Ldhb).